A 99-amino-acid polypeptide reads, in one-letter code: NADH-quinone oxidoreductase subunit K (99 aa).

The next 3 membrane-spanning stretches (helical) occupy residues 3-23 (ILFS…GILI), 28-48 (LIVF…FVAF), and 59-79 (IWVF…LAII).

The protein belongs to the complex I subunit 4L family. NDH-1 is composed of 14 different subunits. Subunits NuoA, H, J, K, L, M, N constitute the membrane sector of the complex.

It is found in the cell inner membrane. It catalyses the reaction a quinone + NADH + 5 H(+)(in) = a quinol + NAD(+) + 4 H(+)(out). Functionally, NDH-1 shuttles electrons from NADH, via FMN and iron-sulfur (Fe-S) centers, to quinones in the respiratory chain. The immediate electron acceptor for the enzyme in this species is believed to be ubiquinone. Couples the redox reaction to proton translocation (for every two electrons transferred, four hydrogen ions are translocated across the cytoplasmic membrane), and thus conserves the redox energy in a proton gradient. The polypeptide is NADH-quinone oxidoreductase subunit K (Protochlamydia amoebophila (strain UWE25)).